The sequence spans 1367 residues: DNA polymerase III PolC-type (1367 aa).

One can recognise an Exonuclease domain in the interval 358–513; it reads FVVLDFETTG…DDARVTAQVF (156 aa).

This sequence belongs to the DNA polymerase type-C family. PolC subfamily.

It is found in the cytoplasm. It carries out the reaction DNA(n) + a 2'-deoxyribonucleoside 5'-triphosphate = DNA(n+1) + diphosphate. Functionally, required for replicative DNA synthesis. This DNA polymerase also exhibits 3' to 5' exonuclease activity. The chain is DNA polymerase III PolC-type from Thermotoga petrophila (strain ATCC BAA-488 / DSM 13995 / JCM 10881 / RKU-1).